Consider the following 199-residue polypeptide: Thymidine kinase (199 aa).

ATP is bound by residues 15–22 (GSMFSGKS) and 88–91 (DEVQ). The Proton acceptor role is filled by Glu-89. Zn(2+) is bound by residues Cys-145, Cys-148, Cys-183, and His-186.

The protein belongs to the thymidine kinase family. In terms of assembly, homotetramer.

The protein resides in the cytoplasm. It carries out the reaction thymidine + ATP = dTMP + ADP + H(+). In Staphylococcus aureus (strain USA300), this protein is Thymidine kinase.